The chain runs to 446 residues: Na(+)-translocating NADH-quinone reductase subunit A (446 aa).

Belongs to the NqrA family. In terms of assembly, composed of six subunits; NqrA, NqrB, NqrC, NqrD, NqrE and NqrF.

It carries out the reaction a ubiquinone + n Na(+)(in) + NADH + H(+) = a ubiquinol + n Na(+)(out) + NAD(+). Functionally, NQR complex catalyzes the reduction of ubiquinone-1 to ubiquinol by two successive reactions, coupled with the transport of Na(+) ions from the cytoplasm to the periplasm. NqrA to NqrE are probably involved in the second step, the conversion of ubisemiquinone to ubiquinol. The protein is Na(+)-translocating NADH-quinone reductase subunit A of Psychromonas ingrahamii (strain DSM 17664 / CCUG 51855 / 37).